The following is a 640-amino-acid chain: MPVITLPDGSQRSFDHAVSVADVAASIGAGLAKATVAGKVDGKLVDACDLISNDATLQIITPKDEEGLEIIRHSCAHLVGHAVKQLYPTAKMVIGPVIDEGFYYDIAYERPFTPEDMAAIEKRMMELIEKDYDVVKKMTPRAEVIDVFKARGEDYKLRLVEDMPDEQAMGLYYHEEYVDMCRGPHVPNTRFLKAFKLTKLSGAYWRGDAKNEQLQRVYGTAWADKKQLAAYIQRIEEAEKRDHRKIGKQLDLFHLQEEAPGMVFWHANGWTVYQVLEQYMRGVQRENGYQEIKTPQVVDRILWERSGHWSNYAENMFTTSSESRDYAVKPMNCPCHVQVFNQGLKSYRDLPLRLAEFGACHRNEPSGALHGIMRVRGFVQDDAHIFCTEEQVKKEAADFIKLTLDVYKDFGFSDIAMKLSTRPAKRVGSEELWDRAETALADALNESGLEWEYQPGEGAFYGPKIEFTLRDCLGRNWQCGTLQYDPNLPERLDASYIAEDNSRVRPVMLHRAILGSFERFIGMLIEHYAGVFPAWLAPTQAVIMNITDKQADFALEVEKSLNGSGFRAKSDLRNEKIGFKIREHTLLKVPYLLVIGDREVETQTVAVRTREGADLGSMPVAQFAELLTQAVSRRGRQESE.

The TGS domain maps to 1–61 (MPVITLPDGS…SNDATLQIIT (61 aa)). The catalytic stretch occupies residues 242 to 533 (DHRKIGKQLD…LIEHYAGVFP (292 aa)). Zn(2+) is bound by residues Cys-333, His-384, and His-510.

This sequence belongs to the class-II aminoacyl-tRNA synthetase family. Homodimer. The cofactor is Zn(2+).

Its subcellular location is the cytoplasm. The catalysed reaction is tRNA(Thr) + L-threonine + ATP = L-threonyl-tRNA(Thr) + AMP + diphosphate + H(+). In terms of biological role, catalyzes the attachment of threonine to tRNA(Thr) in a two-step reaction: L-threonine is first activated by ATP to form Thr-AMP and then transferred to the acceptor end of tRNA(Thr). Also edits incorrectly charged L-seryl-tRNA(Thr). The sequence is that of Threonine--tRNA ligase from Pseudomonas putida (strain GB-1).